The primary structure comprises 465 residues: Putative mannose-1-phosphate guanylyltransferase (465 aa).

This sequence belongs to the mannose-6-phosphate isomerase type 2 family.

It carries out the reaction alpha-D-mannose 1-phosphate + GTP + H(+) = GDP-alpha-D-mannose + diphosphate. The protein operates within nucleotide-sugar biosynthesis; GDP-alpha-D-mannose biosynthesis; GDP-alpha-D-mannose from alpha-D-mannose 1-phosphate (GTP route): step 1/1. It participates in bacterial outer membrane biogenesis; LPS O-antigen biosynthesis. In Vibrio cholerae serotype O1 (strain ATCC 39315 / El Tor Inaba N16961), this protein is Putative mannose-1-phosphate guanylyltransferase (rfbA).